Reading from the N-terminus, the 404-residue chain is S-adenosylmethionine synthase (404 aa).

His17 contributes to the ATP binding site. Mg(2+) is bound at residue Asp19. Residue Glu45 coordinates K(+). The L-methionine site is built by Glu58 and Gln101. The interval Gln101–Arg111 is flexible loop. ATP contacts are provided by residues Asp172 to Lys174, Arg246 to Phe247, Asp255, Arg261 to Lys262, Ala278, and Lys282. Position 255 (Asp255) interacts with L-methionine. Lys286 serves as a coordination point for L-methionine.

The protein belongs to the AdoMet synthase family. In terms of assembly, homotetramer; dimer of dimers. Mg(2+) is required as a cofactor. K(+) serves as cofactor.

Its subcellular location is the cytoplasm. It carries out the reaction L-methionine + ATP + H2O = S-adenosyl-L-methionine + phosphate + diphosphate. Its pathway is amino-acid biosynthesis; S-adenosyl-L-methionine biosynthesis; S-adenosyl-L-methionine from L-methionine: step 1/1. Its function is as follows. Catalyzes the formation of S-adenosylmethionine (AdoMet) from methionine and ATP. The overall synthetic reaction is composed of two sequential steps, AdoMet formation and the subsequent tripolyphosphate hydrolysis which occurs prior to release of AdoMet from the enzyme. This Chlorobaculum tepidum (strain ATCC 49652 / DSM 12025 / NBRC 103806 / TLS) (Chlorobium tepidum) protein is S-adenosylmethionine synthase.